Consider the following 176-residue polypeptide: Transcription factor E (176 aa).

The HTH TFE/IIEalpha-type domain occupies 5 to 89 (IDQLMKDMAR…YWKANVDQIN (85 aa)).

It belongs to the TFE family. As to quaternary structure, monomer. Interaction with RNA polymerase subunits RpoF and RpoE is necessary for Tfe stimulatory transcription activity. Able to interact with Tbp and RNA polymerase in the absence of DNA promoter. Interacts both with the preinitiation and elongation complexes.

Functionally, transcription factor that plays a role in the activation of archaeal genes transcribed by RNA polymerase. Facilitates transcription initiation by enhancing TATA-box recognition by TATA-box-binding protein (Tbp), and transcription factor B (Tfb) and RNA polymerase recruitment. Not absolutely required for transcription in vitro, but particularly important in cases where Tbp or Tfb function is not optimal. It dynamically alters the nucleic acid-binding properties of RNA polymerases by stabilizing the initiation complex and destabilizing elongation complexes. Seems to translocate with the RNA polymerase following initiation and acts by binding to the non template strand of the transcription bubble in elongation complexes. The sequence is that of Transcription factor E from Metallosphaera sedula (strain ATCC 51363 / DSM 5348 / JCM 9185 / NBRC 15509 / TH2).